A 243-amino-acid chain; its full sequence is Terpene cyclase dpmaB (243 aa).

A run of 6 helical transmembrane segments spans residues 11 to 31, 51 to 71, 112 to 132, 141 to 161, 169 to 189, and 207 to 227; these read PGYLEVAWIADTCKLLMGLGW, ALMPLCCNFAWELTYAVIYPF, LPFIFIICIAAWTTAHLALAL, AFSAYGCQLLLSVGALCQLLS, SYFLWFCRFFGSLVLIPQDVL, and IWFVSIFLLLDGSYALCLWYV.

The protein belongs to the paxB family.

The protein localises to the membrane. It functions in the pathway secondary metabolite biosynthesis; terpenoid biosynthesis. Its function is as follows. Terpene cyclase; part of the gene cluster that mediates the biosynthesis of the diterpenoid pyrones subglutinols A and B. The first step of the pathway is the synthesis of the alpha-pyrone moiety by the polyketide synthase dpmaA via condensation of one acetyl-CoA starter unit with 3 malonyl-CoA units and 2 methylations. The alpha-pyrone is then combined with geranylgeranyl pyrophosphate (GGPP) formed by the GGPP synthase dpmaD through the action of the prenyltransferase dpmaC to yield a linear alpha-pyrone diterpenoid. Subsequent steps in the diterpenoid pyrone biosynthetic pathway involve the decalin core formation, which is initiated by the epoxidation of the C10-C11 olefin by the FAD-dependent oxidoreductase dpmaE, and is followed by a cyclization cascade catalyzed by the terpene cyclase dpmaB. The dehydrogenase dpmaF is then involved in tetrahydrofuran (THF) ring formation at the C5 unit to complete the formation of subglutinols A and B. This chain is Terpene cyclase dpmaB, found in Metarhizium anisopliae (Entomophthora anisopliae).